Consider the following 236-residue polypeptide: Histone H1 (236 aa).

The segment covering 1–10 (MPPKKTETKA) has biased composition (basic and acidic residues). Disordered stretches follow at residues 1-36 (MPPK…SPST) and 94-236 (KGVF…AEKA). The segment covering 11–36 (ADASAAAAPAPAAAPTSAPKTKSPST) has biased composition (low complexity). Residues 36 to 111 (THASYLDMIT…GPSGGTKLAK (76 aa)) enclose the H15 domain. The segment covering 109–122 (LAKKVAKPAPKKAA) has biased composition (basic residues). A compositionally biased stretch (basic and acidic residues) spans 123–150 (PKKETKEKKPAAAKKEGAAKKETKEKKA). Over residues 153–162 (AKKAAAPKKA) the composition is skewed to low complexity. Basic and acidic residues predominate over residues 165–174 (PKKEVKEKKA). Over residues 202-220 (AKSTAKPAAAKKAAAPKKA) the composition is skewed to low complexity. Residues 224–236 (KKAEKAEPAAEKA) show a composition bias toward basic and acidic residues.

Belongs to the histone H1/H5 family.

The protein localises to the nucleus. Its subcellular location is the chromosome. Could act as an H1-type linker histone. This is Histone H1 (hH1) from Neurospora crassa (strain ATCC 24698 / 74-OR23-1A / CBS 708.71 / DSM 1257 / FGSC 987).